The sequence spans 138 residues: Large ribosomal subunit protein uL16 (138 aa).

A compositionally biased stretch (basic residues) spans 1 to 15 (MLSPKKVKYRKKQRG). Residues 1–20 (MLSPKKVKYRKKQRGRLSGE) form a disordered region.

Belongs to the universal ribosomal protein uL16 family. As to quaternary structure, part of the 50S ribosomal subunit.

Binds 23S rRNA and is also seen to make contacts with the A and possibly P site tRNAs. The chain is Large ribosomal subunit protein uL16 from Borrelia hermsii (strain HS1 / DAH).